The primary structure comprises 464 residues: Maturase K (464 aa).

This sequence belongs to the intron maturase 2 family. MatK subfamily.

It is found in the plastid. Its subcellular location is the chloroplast. Usually encoded in the trnK tRNA gene intron. Probably assists in splicing its own and other chloroplast group II introns. The sequence is that of Maturase K from Castanea crenata (Japanese chestnut).